Consider the following 331-residue polypeptide: Polyprenyl transferase mpaA' (331 aa).

Helical transmembrane passes span 27-47, 56-76, 127-147, 159-179, 190-210, 240-260, 264-284, and 295-315; these read MPYYTMMAAVWATFIAGALKL, IEFILYKAGLCFVHCLLLCGA, LILDGRNIWTLMLPLTASIML, VFVYPQYILGLAIGYPAITGW, GDIIKHCIPICLLVFFWCVYF, LFLAFLSVLPLLTIPYIISTI, WLWVSWMATWTVSIVMQIAQF, and IHWDNFLLGLWTIVACMVEVG.

This sequence belongs to the UbiA prenyltransferase family. Requires Mg(2+) as cofactor.

It localises to the golgi apparatus membrane. It carries out the reaction 5,7-dihydroxy-4-methylphthalide + (2E,6E)-farnesyl diphosphate = 4-farnesyl-3,5-dihydroxy-6-methylphthalide + diphosphate. It participates in secondary metabolite biosynthesis; terpenoid biosynthesis. Polyprenyl transferase; part of the gene cluster that mediates the biosynthesis of mycophenolic acid (MPA), the first isolated antibiotic natural product in the world obtained from a culture of Penicillium brevicompactum in 1893. MpaA' is a Golgi apparatus-associated enzyme that catalyzes the prenylation of 5,7-dihydroxy-4,6-dimethylphthalide (DHMP) to yield farnesyl-DHMP (FDHMP). The first step of the pathway is the synthesis of 5-methylorsellinic acid (5MOA) by the cytosolic polyketide synthase mpaC. 5MOA is then converted to the phthalide compound 5,7-dihydroxy-4,6-dimethylphthalide (DHMP) by the endoplasmic reticulum-bound cytochrome P450 monooxygenase mpaDE. MpaDE first catalyzes hydroxylation of 5-MOA to 4,6-dihydroxy-2-(hydroxymethyl)-3-methylbenzoic acid (DHMB). MpaDE then acts as a lactone synthase that catalyzes the ring closure to convert DHMB into DHMP. The next step is the prenylation of DHMP by the Golgi apparatus-associated prenyltransferase mpaA to yield farnesyl-DHMP (FDHMP). The ER-bound oxygenase mpaB then mediates the oxidative cleavage the C19-C20 double bond in FDHMP to yield FDHMP-3C via a mycophenolic aldehyde intermediate. The O-methyltransferase mpaG catalyzes the methylation of FDHMP-3C to yield MFDHMP-3C. After the cytosolic methylation of FDHMP-3C, MFDHMP-3C enters into peroxisomes probably via free diffusion due to its low molecular weight. Upon a peroxisomal CoA ligation reaction, catalyzed by a beta-oxidation component enzyme acyl-CoA ligase ACL891, MFDHMP-3C-CoA would then be restricted to peroxisomes for the following beta-oxidation pathway steps. The peroxisomal beta-oxidation machinery than converts MFDHMP-3C-CoA into MPA_CoA, via a beta-oxidation chain-shortening process. Finally mpaH acts as a peroxisomal acyl-CoA hydrolase with high substrate specificity toward MPA-CoA to release the final product MPA. This Penicillium brevicompactum protein is Polyprenyl transferase mpaA'.